Consider the following 204-residue polypeptide: Probable carboxysome shell protein CsoS1E (204 aa).

3 stretches are compositionally biased toward low complexity: residues 1–14 (MPKP…DSPS), 41–84 (SAST…AAGS), and 92–102 (GGAIKPPASSS). The tract at residues 1–102 (MPKPSSSSSS…GAIKPPASSS (102 aa)) is disordered. The BMC domain maps to 111 to 196 (ALGMIETRGM…PHQEVEPALR (86 aa)).

It belongs to the bacterial microcompartments protein family. As to quaternary structure, homohexamer.

It localises to the carboxysome. In terms of biological role, a probable carboxysomal shell protein found only in Prochlorococcus and Synechococcus strains that grow in low light. In Prochlorococcus marinus (strain MIT 9313), this protein is Probable carboxysome shell protein CsoS1E.